The primary structure comprises 459 residues: Trigger factor (459 aa).

A PPIase FKBP-type domain is found at 166–245 (GDFANIDLTA…VNSVKAEELP (80 aa)).

It belongs to the FKBP-type PPIase family. Tig subfamily.

It localises to the cytoplasm. The catalysed reaction is [protein]-peptidylproline (omega=180) = [protein]-peptidylproline (omega=0). Involved in protein export. Acts as a chaperone by maintaining the newly synthesized protein in an open conformation. Functions as a peptidyl-prolyl cis-trans isomerase. The sequence is that of Trigger factor from Bifidobacterium longum (strain DJO10A).